The primary structure comprises 113 residues: Dynein light chain Tctex-type 1 (113 aa).

Position 1 is an N-acetylmethionine (Met-1). An interaction with GNB1 region spans residues Gln-41–Ile-113.

It belongs to the dynein light chain Tctex-type family. As to quaternary structure, homodimer. The cytoplasmic dynein 1 complex consists of two catalytic heavy chains (HCs) and a number of non-catalytic subunits presented by intermediate chains (ICs), light intermediate chains (LICs) and light chains (LCs); the composition seems to vary in respect to the IC, LIC and LC composition. The heavy chain homodimer serves as a scaffold for the probable homodimeric assembly of the non-catalytic subunits. The ICs and LICs bind directly to the HC dimer and the LCs assemble on the IC dimer. DYNLT1 and DYNLT3 compete for association with dynein IC (DYNC1I1 or DYNC1I2). Self-associates. Interacts with RHO. Interacts with DYNC1I1 and DYNC1I2. Interacts with DOC2A, DOC2B and SCN10A. Interacts with PVR. Interacts with SVIL isoform 2. Interacts with GNB1; the interaction occurs in presence of guanine nucleotide-binding protein G(T) subunit gamma; the interaction diminishes the association of DYNLT1 with dynein IC (DYNC1I1 or DYNC1I2). Interacts with GNB2, GNB3 and GNB5; the interactions occur in presence of guanine nucleotide-binding protein G(T) subunit gamma. Interacts with ACVR2B and ARHGEF2. Interacts with DNAI4. Interacts with CFAP61. Phosphorylated by BMPR2. The phosphorylation status is proposed to regulate the association with the cytoplasmic dynein complex and may have role in cytoplasmic dynein cargo release.

It is found in the golgi apparatus. Its subcellular location is the cytoplasm. The protein localises to the cytoskeleton. The protein resides in the spindle. Functionally, acts as one of several non-catalytic accessory components of the cytoplasmic dynein 1 complex that are thought to be involved in linking dynein to cargos and to adapter proteins that regulate dynein function. Cytoplasmic dynein 1 acts as a motor for the intracellular retrograde motility of vesicles and organelles along microtubules. Binds to transport cargos and is involved in apical cargo transport such as rhodopsin-bearing vesicles in polarized epithelia. May also be a accessory component of axonemal dynein. Plays a role in neuronal morphogenesis; the function is independent of cytoplasmic dynein and seems to be coupled to regulation of the actin cytoskeleton by enhancing Rac1 activity. The function in neurogenesis may be regulated by association with a G-protein beta-gamma dimer. May function as a receptor-independent activator of heterotrimeric G-protein signaling; the activation appears to be independent of a nucleotide exchange. Plays a role in regulating neurogenesis; inhibits the genesis of neurons from precursor cells during cortical development presumably by antagonizing ARHGEF2. Involved in the regulation of mitotic spindle orientation. Unrelated to the role in retrograde microtubule-associated movement may play a role in the dimerization of cytoplasmic proteins/domains such as for ACVR2B. Binds to the cytoplasmic domain of ACVR2B and, in vitro, inhibits ACVR2B signaling. This Bos taurus (Bovine) protein is Dynein light chain Tctex-type 1 (DYNLT1).